Reading from the N-terminus, the 484-residue chain is Chromosomal replication initiator protein DnaA (484 aa).

The segment at 1–73 is domain I, interacts with DnaA modulators; the sequence is MQEGKNIWSL…EILIEKGHNT (73 aa). Residues 73–140 form a domain II region; the sequence is TINVEFINSP…EEIHTKYRNP (68 aa). The interval 141 to 357 is domain III, AAA+ region; the sequence is FLKKKYTFEN…AAVTKLKAHI (217 aa). 4 residues coordinate ATP: G185, G187, K188, and T189. A domain IV, binds dsDNA region spans residues 358 to 484; that stretch reads DLEDIEIDTS…IELMNKINKK (127 aa).

This sequence belongs to the DnaA family. As to quaternary structure, oligomerizes as a right-handed, spiral filament on DNA at oriC.

Its subcellular location is the cytoplasm. Plays an essential role in the initiation and regulation of chromosomal replication. ATP-DnaA binds to the origin of replication (oriC) to initiate formation of the DNA replication initiation complex once per cell cycle. Binds the DnaA box (a 9 base pair repeat at the origin) and separates the double-stranded (ds)DNA. Forms a right-handed helical filament on oriC DNA; dsDNA binds to the exterior of the filament while single-stranded (ss)DNA is stabiized in the filament's interior. The ATP-DnaA-oriC complex binds and stabilizes one strand of the AT-rich DNA unwinding element (DUE), permitting loading of DNA polymerase. After initiation quickly degrades to an ADP-DnaA complex that is not apt for DNA replication. Binds acidic phospholipids. In Borrelia hermsii (strain HS1 / DAH), this protein is Chromosomal replication initiator protein DnaA.